Reading from the N-terminus, the 133-residue chain is Fatty acid-binding protein homolog 2 (133 aa).

Residues R107 and 127–129 contribute to the a fatty acid site; that span reads RTY.

This sequence belongs to the calycin superfamily. Fatty-acid binding protein (FABP) family.

Functionally, may play a role in the acquisition, storage, and transport of lipids, and may be important to the organism since it is incapable of synthesizing most of its lipids de novo. In Echinococcus granulosus (Hydatid tapeworm), this protein is Fatty acid-binding protein homolog 2 (FABP2).